Consider the following 175-residue polypeptide: Probable DNA-directed RNA polymerase subunit delta (175 aa).

In terms of domain architecture, HTH HARE-type spans 14–81 (MALVEIAHEI…SDQTWGLRSW (68 aa)). The segment at 110–175 (LDLDEFEEVD…YDDEEEDRKD (66 aa)) is disordered.

The protein belongs to the RpoE family. As to quaternary structure, RNAP is composed of a core of 2 alpha, a beta and a beta' subunits. The core is associated with a delta subunit and one of several sigma factors.

In terms of biological role, participates in both the initiation and recycling phases of transcription. In the presence of the delta subunit, RNAP displays an increased specificity of transcription, a decreased affinity for nucleic acids, and an increased efficiency of RNA synthesis because of enhanced recycling. The polypeptide is Probable DNA-directed RNA polymerase subunit delta (Bacillus velezensis (strain DSM 23117 / BGSC 10A6 / LMG 26770 / FZB42) (Bacillus amyloliquefaciens subsp. plantarum)).